We begin with the raw amino-acid sequence, 308 residues long: Protein translocase subunit SecF (308 aa).

Transmembrane regions (helical) follow at residues alanine 22–tyrosine 42, isoleucine 140–valine 160, tryptophan 164–phenylalanine 184, leucine 194–isoleucine 214, isoleucine 246–alanine 266, and valine 272–isoleucine 292.

It belongs to the SecD/SecF family. SecF subfamily. Forms a complex with SecD. Part of the essential Sec protein translocation apparatus which comprises SecA, SecYEG and auxiliary proteins SecDF-YajC and YidC.

The protein resides in the cell inner membrane. Its function is as follows. Part of the Sec protein translocase complex. Interacts with the SecYEG preprotein conducting channel. SecDF uses the proton motive force (PMF) to complete protein translocation after the ATP-dependent function of SecA. This is Protein translocase subunit SecF from Rickettsia akari (strain Hartford).